The sequence spans 416 residues: SVGFKAGVKEYKLTYYTPEYETKDTDILAAFRVTPQPGVPPEEAGAAVAAESSTGTWTTVWTDGLTSLDRYKGRCYHIEPVPGEEDQYIAYVAYPLDLFEEGSVTNMFTSIVGNVFGFKALRALRLEDLRIPVAYVKTFQGPPHGIQVERDKLNKYGRPLLGCTIKPKLGLSAKNYGRAVYECLRGGLDFTKDDENVNSQPFMRWRDRFLFCTEALFKAQVETGEIKGHYLNATAGTCEEMMKRAVFARELGVPIIMHDYLTGGFTANTTLAHYCRDNGLLLHIHRAMHAVIDRQKNHGMHFRVLAKGLRMSGGDHIHAGTVVGKLEGERDITLGFVDLLRDDFIEKDRSRGIYFTQDWVSLPGVIPVASGGIHVXHMPALTEIFGDDSVLQXGGGTLXXPWGNAPXAVANRVALX.

An N6,N6,N6-trimethyllysine modification is found at lysine 5. Substrate contacts are provided by asparagine 114 and threonine 164. Lysine 166 (proton acceptor) is an active-site residue. Lysine 168 contributes to the substrate binding site. Residues lysine 192, aspartate 194, and glutamate 195 each coordinate Mg(2+). Position 192 is an N6-carboxylysine (lysine 192). Histidine 285 acts as the Proton acceptor in catalysis. Residues arginine 286, histidine 318, and serine 370 each contribute to the substrate site.

This sequence belongs to the RuBisCO large chain family. Type I subfamily. Heterohexadecamer of 8 large chains and 8 small chains; disulfide-linked. The disulfide link is formed within the large subunit homodimers. Mg(2+) serves as cofactor. The disulfide bond which can form in the large chain dimeric partners within the hexadecamer appears to be associated with oxidative stress and protein turnover.

It localises to the plastid. Its subcellular location is the chloroplast. It carries out the reaction 2 (2R)-3-phosphoglycerate + 2 H(+) = D-ribulose 1,5-bisphosphate + CO2 + H2O. It catalyses the reaction D-ribulose 1,5-bisphosphate + O2 = 2-phosphoglycolate + (2R)-3-phosphoglycerate + 2 H(+). Functionally, ruBisCO catalyzes two reactions: the carboxylation of D-ribulose 1,5-bisphosphate, the primary event in carbon dioxide fixation, as well as the oxidative fragmentation of the pentose substrate in the photorespiration process. Both reactions occur simultaneously and in competition at the same active site. The polypeptide is Ribulose bisphosphate carboxylase large chain (rbcL) (Spigelia marilandica (Woodland pinkroot)).